A 652-amino-acid polypeptide reads, in one-letter code: MSDSDKTAARVAPKYVPISSFVESSFFTKLSELKLNEFKLDSSKRDIHGFITSPRRLNKFNDQPTLNLDLQSFDIAEKEANNLHISGELYNVNTIEEFKNINKSDLLNDWGKEVYTRLIQTESLDYKAFNWFFILTFSDLKKYKFYYWVAFPTLNAPWFVTSTRDDSLVEKHTKNITRLLENDGDSENLAFSQLYQVVGESYLDLNSIRSSRNGVFVFLDGCLNKETKPSVQLKNYLYFLAYKGFEDVDVIVYRNDGSSFQVHYELDTDSFNKNVQPKITGWERTSQGKLGPKLADLGSLINPHQLADQAVDLNLKLMKWRIAPELNLDIVKEQRVLLLGAGTLGSYVARALMGWGVRKITFVDNGRISYSNPVRQPLFSFKDCFSDNGQGEMKAARAAEALKEIFPGVSSEGISLEVPMIGHPVSDEAKSKSNFGTLSQLFDDHDIIYLLMDSRESRWLPTVLGYAKNKIVINAALGFDSYLVMRHGNLSQPEESRLGCYYCNDVVAPNDSLTDRTLDQMCTVTRPGVALMASALAVELLVSILQHPDGSKAAQDESTKFGGVPHQIRGFLHNFQQTKLYAPNYKHCSACSHTVISKFEEEGWEFVKKCLNDSGYLEEICGLKQVQEEAEKATEDLMKDMDLDDEDSEWLD.

A GXGXXG motif motif is present at residues 340 to 345; that stretch reads GAGTLG. Cysteine 522 serves as the catalytic Glycyl thioester intermediate.

The protein belongs to the ATG7 family. In terms of assembly, homodimer.

It is found in the cytoplasm. The protein resides in the preautophagosomal structure. In terms of biological role, E1-like activating enzyme involved in the 2 ubiquitin-like systems required for cytoplasm to vacuole transport (Cvt) and autophagy. Activates ATG12 for its conjugation with ATG5 and ATG8 for its conjugation with phosphatidylethanolamine. Both systems are needed for the ATG8 association to Cvt vesicles and autophagosomes membranes. Autophagy is essential for maintenance of amino acid levels and protein synthesis under nitrogen starvation. Required for selective autophagic degradation of the nucleus (nucleophagy) as well as for mitophagy which contributes to regulate mitochondrial quantity and quality by eliminating the mitochondria to a basal level to fulfill cellular energy requirements and preventing excess ROS production. Plays a role in the regulation of filamentous growth and chronological longevity. This chain is Ubiquitin-like modifier-activating enzyme ATG7 (ATG7), found in Scheffersomyces stipitis (strain ATCC 58785 / CBS 6054 / NBRC 10063 / NRRL Y-11545) (Yeast).